Consider the following 282-residue polypeptide: Bifunctional protein FolD (282 aa).

NADP(+) is bound by residues glycine 162–serine 164, serine 187, and valine 228.

It belongs to the tetrahydrofolate dehydrogenase/cyclohydrolase family. As to quaternary structure, homodimer.

It catalyses the reaction (6R)-5,10-methylene-5,6,7,8-tetrahydrofolate + NADP(+) = (6R)-5,10-methenyltetrahydrofolate + NADPH. The catalysed reaction is (6R)-5,10-methenyltetrahydrofolate + H2O = (6R)-10-formyltetrahydrofolate + H(+). It functions in the pathway one-carbon metabolism; tetrahydrofolate interconversion. In terms of biological role, catalyzes the oxidation of 5,10-methylenetetrahydrofolate to 5,10-methenyltetrahydrofolate and then the hydrolysis of 5,10-methenyltetrahydrofolate to 10-formyltetrahydrofolate. The sequence is that of Bifunctional protein FolD from Thermus thermophilus (strain ATCC BAA-163 / DSM 7039 / HB27).